Reading from the N-terminus, the 162-residue chain is Ribonuclease (162 aa).

The N-terminal stretch at 1–29 (MKKISSVFTMFALIAAILFSGFIPQQAYA) is a signal peptide. Positions 30–53 (ETPLTQTATNETATIQLTSDVHTL) are excised as a propeptide. E125 (proton acceptor) is an active-site residue. Residue H154 is the Proton donor of the active site.

The protein belongs to the ribonuclease N1/T1 family.

It localises to the secreted. In terms of biological role, this is a purine-specific ribonuclease. The polypeptide is Ribonuclease (Bacillus intermedius).